A 396-amino-acid polypeptide reads, in one-letter code: 1-deoxy-D-xylulose 5-phosphate reductoisomerase (396 aa).

The NADPH site is built by Thr10, Gly11, Ser12, Ile13, Gly36, Lys37, Asn38, and Asn124. Residue Lys125 participates in 1-deoxy-D-xylulose 5-phosphate binding. Glu126 lines the NADPH pocket. A Mn(2+)-binding site is contributed by Asp150. Residues Ser151, Glu152, Ser186, and His209 each coordinate 1-deoxy-D-xylulose 5-phosphate. Glu152 lines the Mn(2+) pocket. NADPH is bound at residue Gly215. 1-deoxy-D-xylulose 5-phosphate contacts are provided by Ser222, Asn227, Lys228, and Glu231. Position 231 (Glu231) interacts with Mn(2+).

It belongs to the DXR family. Requires Mg(2+) as cofactor. Mn(2+) serves as cofactor.

It catalyses the reaction 2-C-methyl-D-erythritol 4-phosphate + NADP(+) = 1-deoxy-D-xylulose 5-phosphate + NADPH + H(+). It functions in the pathway isoprenoid biosynthesis; isopentenyl diphosphate biosynthesis via DXP pathway; isopentenyl diphosphate from 1-deoxy-D-xylulose 5-phosphate: step 1/6. Its function is as follows. Catalyzes the NADPH-dependent rearrangement and reduction of 1-deoxy-D-xylulose-5-phosphate (DXP) to 2-C-methyl-D-erythritol 4-phosphate (MEP). The protein is 1-deoxy-D-xylulose 5-phosphate reductoisomerase of Actinobacillus pleuropneumoniae serotype 3 (strain JL03).